A 702-amino-acid chain; its full sequence is Neurochondrin (702 aa).

It belongs to the neurochondrin family.

The protein localises to the cytoplasm. Its subcellular location is the cytosol. The protein resides in the cell projection. It localises to the dendrite. It is found in the postsynapse. Its function is as follows. Probably involved in signal transduction, in the nervous system. Required for the spatial learning process. May also be involved in neurite outgrowth. The polypeptide is Neurochondrin (NCDN) (Gallus gallus (Chicken)).